The primary structure comprises 379 residues: Alcohol dehydrogenase 1 (379 aa).

Zn(2+)-binding residues include Cys-47, Thr-49, His-69, Cys-99, Cys-102, Cys-105, Cys-113, and Cys-177. Positions 49 and 69 each coordinate an alcohol. An NAD(+)-binding site is contributed by Thr-49. NAD(+)-binding positions include 202 to 207 (GLGAVG), Asp-226, Arg-231, Thr-272, Val-295, 295 to 297 (VGV), Phe-322, and Arg-372.

This sequence belongs to the zinc-containing alcohol dehydrogenase family. Homodimer. Zn(2+) serves as cofactor.

Its subcellular location is the cytoplasm. The enzyme catalyses a primary alcohol + NAD(+) = an aldehyde + NADH + H(+). It catalyses the reaction a secondary alcohol + NAD(+) = a ketone + NADH + H(+). This is Alcohol dehydrogenase 1 (ADH1) from Zea mays (Maize).